Reading from the N-terminus, the 144-residue chain is L-fucose mutarotase (144 aa).

H22 acts as the Proton donor in catalysis. Residues D30, R109, and 131 to 133 each bind substrate; that span reads YGN.

The protein belongs to the RbsD / FucU family. FucU mutarotase subfamily. In terms of assembly, homodecamer.

Its subcellular location is the cytoplasm. The enzyme catalyses alpha-L-fucose = beta-L-fucose. It functions in the pathway carbohydrate metabolism; L-fucose metabolism. Its function is as follows. Involved in the anomeric conversion of L-fucose. This Actinobacillus pleuropneumoniae serotype 5b (strain L20) protein is L-fucose mutarotase.